Reading from the N-terminus, the 355-residue chain is S-methyl-5'-thioadenosine phosphorylase (355 aa).

Residues threonine 45, 91–92 (RH), and 124–125 (SA) contribute to the phosphate site. Position 226 (methionine 226) interacts with substrate. Serine 227 is a phosphate binding site. A substrate-binding site is contributed by 250–252 (DYD).

Belongs to the PNP/MTAP phosphorylase family. MTAP subfamily. Homotrimer.

It localises to the cytoplasm. Its subcellular location is the nucleus. The enzyme catalyses S-methyl-5'-thioadenosine + phosphate = 5-(methylsulfanyl)-alpha-D-ribose 1-phosphate + adenine. The protein operates within amino-acid biosynthesis; L-methionine biosynthesis via salvage pathway; S-methyl-5-thio-alpha-D-ribose 1-phosphate from S-methyl-5'-thioadenosine (phosphorylase route): step 1/1. Functionally, catalyzes the reversible phosphorylation of S-methyl-5'-thioadenosine (MTA) to adenine and 5-methylthioribose-1-phosphate. Involved in the breakdown of MTA, a major by-product of polyamine biosynthesis. Responsible for the first step in the methionine salvage pathway after MTA has been generated from S-adenosylmethionine. Has broad substrate specificity with 6-aminopurine nucleosides as preferred substrates. The sequence is that of S-methyl-5'-thioadenosine phosphorylase from Emericella nidulans (strain FGSC A4 / ATCC 38163 / CBS 112.46 / NRRL 194 / M139) (Aspergillus nidulans).